The chain runs to 727 residues: Polyribonucleotide nucleotidyltransferase (727 aa).

Mg(2+) contacts are provided by Asp-491 and Asp-497. The region spanning 558-617 (PRIITASIHPDKIREVIGPGGKTIKKIIDETGVKIDIEDDGRVFISAVDGEAGENALKII) is the KH domain. Positions 627–701 (GRIYNGRVTR…KQGRLNLSRK (75 aa)) constitute an S1 motif domain. The interval 698 to 727 (LSRKEALPNPNPSSNPNPNGITANRNPRNS) is disordered. The span at 717 to 727 (GITANRNPRNS) shows a compositional bias: polar residues.

The protein belongs to the polyribonucleotide nucleotidyltransferase family. The cofactor is Mg(2+).

The protein resides in the cytoplasm. The enzyme catalyses RNA(n+1) + phosphate = RNA(n) + a ribonucleoside 5'-diphosphate. Its function is as follows. Involved in mRNA degradation. Catalyzes the phosphorolysis of single-stranded polyribonucleotides processively in the 3'- to 5'-direction. In Desulfitobacterium hafniense (strain Y51), this protein is Polyribonucleotide nucleotidyltransferase.